The following is a 139-amino-acid chain: Stress-related protein 1 (139 aa).

Polar residues predominate over residues 1 to 12 (MTSESSTPTGST). A disordered region spans residues 1 to 86 (MTSESSTPTG…AERPGSATTP (86 aa)). Composition is skewed to low complexity over residues 14–53 (ALPA…SLVV) and 60–74 (SPVV…TRPR). Serine 60 carries the post-translational modification Phosphoserine.

Embryo.

In terms of biological role, involved in drought, heat, cold, and/or salt tolerance. The sequence is that of Stress-related protein 1 (SRP1) from Zea mays (Maize).